We begin with the raw amino-acid sequence, 84 residues long: Putative membrane protein insertion efficiency factor (84 aa).

It belongs to the UPF0161 family.

The protein resides in the cell inner membrane. Its function is as follows. Could be involved in insertion of integral membrane proteins into the membrane. The protein is Putative membrane protein insertion efficiency factor of Shewanella denitrificans (strain OS217 / ATCC BAA-1090 / DSM 15013).